The following is a 235-amino-acid chain: Vinculin (235 aa).

The protein belongs to the vinculin/alpha-catenin family. Exhibits self-association properties. In terms of processing, phosphorylated on serines, threonines and tyrosines. Post-translationally, acetylated by myristic acid and/or palmitic acid.

Its subcellular location is the cell membrane. The protein localises to the cell junction. It localises to the adherens junction. It is found in the focal adhesion. The protein resides in the cytoplasm. Its subcellular location is the cytoskeleton. The protein localises to the sarcolemma. It localises to the cell projection. It is found in the podosome. Involved in cell adhesion. May be involved in the attachment of the actin-based microfilaments to the plasma membrane. The sequence is that of Vinculin (vcl) from Xenopus laevis (African clawed frog).